We begin with the raw amino-acid sequence, 385 residues long: tRNA (guanine(26)-N(2))-dimethyltransferase (385 aa).

The Trm1 methyltransferase domain maps to 1-379 (MNITEGVVEL…ATIAEIRSAT (379 aa)). S-adenosyl-L-methionine is bound by residues arginine 37, arginine 67, aspartate 82, aspartate 108, and alanine 109. 4 residues coordinate Zn(2+): cysteine 247, cysteine 250, cysteine 267, and cysteine 270.

It belongs to the class I-like SAM-binding methyltransferase superfamily. Trm1 family.

It catalyses the reaction guanosine(26) in tRNA + 2 S-adenosyl-L-methionine = N(2)-dimethylguanosine(26) in tRNA + 2 S-adenosyl-L-homocysteine + 2 H(+). Functionally, dimethylates a single guanine residue at position 26 of a number of tRNAs using S-adenosyl-L-methionine as donor of the methyl groups. The chain is tRNA (guanine(26)-N(2))-dimethyltransferase from Haloquadratum walsbyi (strain DSM 16790 / HBSQ001).